We begin with the raw amino-acid sequence, 214 residues long: Adenylate kinase (214 aa).

Residue 10–15 participates in ATP binding; sequence GAGKGT. Residues 30-59 form an NMP region; that stretch reads STGDMLRAAIKAGTELGLEAKRVMDEGKLV. Residues Thr-31, Arg-36, 57–59, 85–88, and Gln-92 each bind AMP; these read KLV and GFPR. The segment at 122–159 is LID; sequence GRRVHPASGRVYHVVYNPPKVEGKDNETGDDLIVRDDD. Residues Arg-123 and 132 to 133 contribute to the ATP site; that span reads VY. The AMP site is built by Arg-156 and Arg-167. Position 200 (Arg-200) interacts with ATP.

It belongs to the adenylate kinase family. In terms of assembly, monomer.

The protein localises to the cytoplasm. It carries out the reaction AMP + ATP = 2 ADP. It participates in purine metabolism; AMP biosynthesis via salvage pathway; AMP from ADP: step 1/1. Its function is as follows. Catalyzes the reversible transfer of the terminal phosphate group between ATP and AMP. Plays an important role in cellular energy homeostasis and in adenine nucleotide metabolism. The chain is Adenylate kinase from Alteromonas mediterranea (strain DSM 17117 / CIP 110805 / LMG 28347 / Deep ecotype).